A 364-amino-acid polypeptide reads, in one-letter code: 3-isopropylmalate dehydrogenase (364 aa).

77-90 (GPKWDNLPTDKRPE) lines the NAD(+) pocket. Substrate contacts are provided by R97, R107, R135, and D224. 3 residues coordinate Mg(2+): D224, D248, and D252. 281–293 (GSAPDIAGKGIAN) provides a ligand contact to NAD(+).

This sequence belongs to the isocitrate and isopropylmalate dehydrogenases family. LeuB type 1 subfamily. As to quaternary structure, homodimer. The cofactor is Mg(2+). It depends on Mn(2+) as a cofactor.

Its subcellular location is the cytoplasm. The catalysed reaction is (2R,3S)-3-isopropylmalate + NAD(+) = 4-methyl-2-oxopentanoate + CO2 + NADH. It functions in the pathway amino-acid biosynthesis; L-leucine biosynthesis; L-leucine from 3-methyl-2-oxobutanoate: step 3/4. Its function is as follows. Catalyzes the oxidation of 3-carboxy-2-hydroxy-4-methylpentanoate (3-isopropylmalate) to 3-carboxy-4-methyl-2-oxopentanoate. The product decarboxylates to 4-methyl-2 oxopentanoate. The polypeptide is 3-isopropylmalate dehydrogenase (leuB) (Aquifex aeolicus (strain VF5)).